The following is a 239-amino-acid chain: Endonuclease V (239 aa).

Mg(2+) is bound by residues Asp50 and Asp118.

This sequence belongs to the endonuclease V family. It depends on Mg(2+) as a cofactor.

It localises to the cytoplasm. The enzyme catalyses Endonucleolytic cleavage at apurinic or apyrimidinic sites to products with a 5'-phosphate.. Its function is as follows. DNA repair enzyme involved in the repair of deaminated bases. Selectively cleaves double-stranded DNA at the second phosphodiester bond 3' to a deoxyinosine leaving behind the intact lesion on the nicked DNA. This Xylella fastidiosa (strain 9a5c) protein is Endonuclease V.